Reading from the N-terminus, the 449-residue chain is NADP-specific glutamate dehydrogenase (449 aa).

Positions 92, 113, and 116 each coordinate substrate. K128 (proton donor) is an active-site residue. G167 contacts substrate. 2 residues coordinate NADP(+): T211 and N242. S380 provides a ligand contact to substrate.

This sequence belongs to the Glu/Leu/Phe/Val dehydrogenases family. In terms of assembly, homohexamer.

The enzyme catalyses L-glutamate + NADP(+) + H2O = 2-oxoglutarate + NH4(+) + NADPH + H(+). Its function is as follows. Catalyzes the reversible oxidative deamination of glutamate to alpha-ketoglutarate and ammonia. This chain is NADP-specific glutamate dehydrogenase (gdhA), found in Haemophilus influenzae (strain ATCC 51907 / DSM 11121 / KW20 / Rd).